A 349-amino-acid polypeptide reads, in one-letter code: Desmethyl-yatein O-methyltransferase (349 aa).

S-adenosyl-L-homocysteine contacts are provided by Gly193, Asp216, Asp236, Met237, Met249, and Lys250. Residue His254 is the Proton acceptor of the active site. Residues Glu282 and Glu314 contribute to the active site.

It belongs to the class I-like SAM-binding methyltransferase superfamily. Cation-independent O-methyltransferase family. COMT subfamily. As to quaternary structure, homodimer. In terms of tissue distribution, mostly expressed in stems, and, to a lower extent, in leaves.

It carries out the reaction (-)-5'-demethylyatein + S-adenosyl-L-methionine = (-)-yatein + S-adenosyl-L-homocysteine + H(+). It participates in aromatic compound metabolism; phenylpropanoid biosynthesis. Its function is as follows. O-methyltransferase involved in the biosynthesis of etoposide, a chemotherapeutic compound of the topoisomerase inhibitor family. Catalyzes the methylation of (-)-5'-demethylyatein to produce (-)-yatein. The polypeptide is Desmethyl-yatein O-methyltransferase (Sinopodophyllum hexandrum (Himalayan may apple)).